A 1942-amino-acid polypeptide reads, in one-letter code: GREB1-like protein (1942 aa).

4 disordered regions span residues 76-101 (SSNSVEDMDDEDDSDTSSPPLPYLQG), 235-306 (PFSN…GTKT), 325-373 (MDGR…HRSW), and 1123-1256 (TKTA…RTQV). Residues 81–90 (EDMDDEDDSD) are compositionally biased toward acidic residues. A compositionally biased stretch (low complexity) spans 237–253 (SNSASSSKPSSSSSLSS). Positions 338–362 (NPLSTPSHGYRTTETGDSPASTAMS) are enriched in polar residues. Residues 1127–1155 (TSREERPREGERSSGETAEHDDLPMELER) are compositionally biased toward basic and acidic residues. Low complexity predominate over residues 1158-1171 (SNASAATRTSGSTT). Positions 1172-1202 (ENGVSSSSILDKPSSQSDPCGSRTMMDSCSS) are enriched in polar residues. Over residues 1212 to 1248 (SQAPSSSSTSSFSSASSSSSSSSSPAAQRPSQSTQAP) the composition is skewed to low complexity. A helical transmembrane segment spans residues 1861–1881 (GVIFSGLLLYLCDSFVVSSLL).

The protein belongs to the GREB1 family.

The protein resides in the membrane. In terms of biological role, plays a major role in early metanephros development. The protein is GREB1-like protein (greb1l) of Danio rerio (Zebrafish).